A 91-amino-acid polypeptide reads, in one-letter code: UPF0512 protein E (91 aa).

The span at Met-1–Asn-25 shows a compositional bias: low complexity. Positions Met-1–Arg-26 are disordered.

The protein belongs to the UPF0512 family.

The polypeptide is UPF0512 protein E (Dictyostelium discoideum (Social amoeba)).